Reading from the N-terminus, the 402-residue chain is uncharacterized protein (402 aa).

12 helical membrane-spanning segments follow: residues 26 to 46 (IFMS…AIAY), 67 to 87 (VALA…YVGF), 96 to 116 (FAAF…LTII), 126 to 146 (TVSI…NGTL), 168 to 188 (LFIL…IGFL), 213 to 233 (YVAY…MIDS), 235 to 255 (LFLL…GGYG), 289 to 309 (PIVI…GSII), 312 to 332 (ISVF…FDSL), 338 to 358 (FKNI…AVTI), 360 to 380 (FALL…SFLL), and 381 to 401 (LYKK…GYLI).

Belongs to the chromate ion transporter (CHR) (TC 2.A.51) family.

It localises to the cell membrane. This is an uncharacterized protein from Methanocaldococcus jannaschii (strain ATCC 43067 / DSM 2661 / JAL-1 / JCM 10045 / NBRC 100440) (Methanococcus jannaschii).